The chain runs to 170 residues: MSKAAIAEKEKLVDAFAEELKAAKAILVINYLGLTVEEVTNMRKDLRDNDVKMKVIKNTYLRRAAAKAGIEGLDDTFVGPTAVIYTDNADDITEPARIVSKYEDDFDVIEIKGGMLEGKLTSKEEIKELASIPGREGLLSMLVSVLQAPVRDFAYAVKAVAESKDEDSAE.

Belongs to the universal ribosomal protein uL10 family. Part of the ribosomal stalk of the 50S ribosomal subunit. The N-terminus interacts with L11 and the large rRNA to form the base of the stalk. The C-terminus forms an elongated spine to which L12 dimers bind in a sequential fashion forming a multimeric L10(L12)X complex.

Its function is as follows. Forms part of the ribosomal stalk, playing a central role in the interaction of the ribosome with GTP-bound translation factors. This is Large ribosomal subunit protein uL10 from Lactobacillus acidophilus (strain ATCC 700396 / NCK56 / N2 / NCFM).